Reading from the N-terminus, the 2615-residue chain is MKILLIIFVLIIWTETLADQSPGPGPVYADVVFLVDSSDHLGPKSFPFVKTFINKMINSLPIEANKYRVALAQYSDEFHSEFHLSTFKGRSPMLNHLKKNFQFIGGSLQIGKALQEAHRTYFSAPINGRDRKQFPPILVVLASAESEDEVEEASKALQKDGVKIISVGVQKASEENLKAMATSHFHFNLRTIRDLSTFSQNMTQIIKDVTKYKEGAVDADMQVHFPISCQKDSLADLVFLVDESLGTGGNLRHLQTFLENITSSMDVKENCMRLGLMSYSNSAKTISFLKSSTTQSEFQQQIKNLSIQVGKSNTGAAIDQMRRDGFSESYGSRRAQGVPQIAVLVTHRPSDDEVHDAALNLRLEDVNVFALSIQGANNTQLEEIVSYPPEQTISTLKSYADLETYSTKFLKKLQNEIWSQISTYAEQRNLDKTGCVDTKEADIHFLIDGSSSIQEKQFEQIKRFMLEVTEMFSIGPDKVRVGVVQYSDDTEVEFYITDYSNDIDLRKAIFNIKQLTGGTYTGKALDYILQIIKNGMKDRMSKVPCYLIVLTDGMSTDRVVEPAKRLRAEQITVHAVGIGAANKIELQEIAGKEERVSFGQNFDALKSIKNEVVREICAEKGCEDMKADIMFLVDSSWSIGNENFRKMKIFMKNLLTKIQIGADKTQIGVVQFSDKTKEEFQLNRYFTQQEISDAIDRMSLINEGTLTGKALNFVGQYFTHSKGARLGAKKFLILITDGVAQDDVRDPARILRGKDVTIFSVGVYNANRSQLEEISGDSSLVFHVENFDHLKALERKLIFRVCALHDCKRITLLDVVFVLDHSGSIKKQYQDHMINLTIHLVKKADVGRDRVQFGALKYSDQPNILFYLNTYSNRSAIIENLRKRRDTGGNTYTAKALKHANALFTEEHGSRIKQNVKQMLIVITDGESHDHDQLNDTALELRNKGITIFAVGVGKANQKELEGMAGNKNNTIYVDNFDKLKDVFTLVQERMCTEAPEVCHLQEADVIFLCDGSDRVSNSDFVTMTTFLSDLIDNFDIQSQRMKIGMAQFGSNYQSIIELKNSLTKTQWKTQIQNVSKSGGFPRIDFALKKVSNMFNLHAGGRRNAGVPQTLVVITSGDPRYDVADAVKTLKDLGICVLVLGIGDVYKEHLLPITGNSEKIITFQDFDKLKNVDVKKRIIREICQSCGKTNCFMDIVVGFDISTHVQGQPLFQGHPQLESYLPGILEDISSIKGVSCGAGTEAQVSLAFKVNSDQGFPAKFQIYQKAVFDSLLQVNVSGPTHLNAQFLRSLWDTFKDKSASRGQVLLIFSDGLQSESNIMLENQSDRLREAGLDALLVVSLNTTAHHEFSSFEFGKRFDYRTHLTIGMRELGKKLSQYLGNIAERTCCCTFCKCPGIPGPHGTRGLQAMKGSQGLKGSRGHRGEDGNPGVRGDTGPQGDKGIAGCPGAWGQKGLKGFSGPKGGHGDDGIDGLDGEEGCHGFPGIKGEKGDPGSQGSPGSRGAPGQYGEKGFPGDPGNPGQNNNIKGQKGSKGEQGRQGRSGQKGVQGSPSSRGSRGREGQRGLRGVSGEPGNPGPTGTLGAEGLQGPQGSQGNPGRKGEKGSQGQKGPQGSPGLMGAKGSTGRPGLLGKKGEPGLPGDLGPVGQTGQRGRQGDSGIPGYGQMGRKGVKGPRGFPGDAGQKGDIGNPGIPGGPGPKGFRGLALTVGLKGEEGSRGLPGPPGQRGIKGMAGQPVYSQCDLIRFLREHSPCWKEKCPAYPTELVFALDNSYDVTEESFNKTRDIITSIVNDLNIRENNCPVGARVAMVSYNSGTSYLIRWSDYNRKKQLLQQLSQIKYQDTTEPRDVGNAMRFVTRNVFKRTYAGANVRRVAVFFSNGQTASRSSIITATMEFSALDISPTVFAFDERVFLEAFGFDNTGTFQVIPVPPNGENQTLERLRRCALCYDKCFPNACIREAFLPEDSYMDVVFLIDNSRNIAKDEFKAVKALVSSVIDNFNIASDPLISDSGDRIALLSYSPWESSRRKMGTVKTEFDFITYDNQLLMKNHIQTSFQQLNGEATIGRALLWTTENLFPETPYLRKHKVIFVVSAGENYERKEFVKMMALRAKCQGYVIFVISLGSTRKDDMEELASYPLDQHLIQLGRIHKPDLNYIAKFLKPFLYSVRRGFNQYPPPMLEDACRLINLGGENIQNDGFQFVTELQEDFLGGNGFIGQELNSGRESPFVKTEDNGSDYLVYLPSQMFEPQKLMINYEKDQKSAEIASLTSGHENYGRKEEPDHTYEPGDVSLQEYYMDVAFLIDASQRVGSDEFKEVKAFITSVLDYFHIAPTPLTSTLGDRVAVLSYSPPGYMPNTEECPVYLEFDLVTYNSIHQMKHHLQDSQQLNGDVFIGHALQWTIDNVFVGTPNLRKNKVIFVISAGETNSLDKDVLRNVSLRAKCQGYSIFVFSFGPKHNDKELEELASHPLDHHLVQLGRTHKPDWNYIIKFVKPFVHLIRRAINKYPTEDMKATCVNMTSPNPENGGTENTVLLLPGIYEIKTENGDLFDEFDSQAQHLLVLGNNHSSGSETATDLMQKLYLLFSTEKLAMKDKEKAHLEEISALVVDKQQEKEDKEMEATDI.

The signal sequence occupies residues 1 to 18 (MKILLIIFVLIIWTETLA). Residues 19 to 1394 (DQSPGPGPVY…TCCCTFCKCP (1376 aa)) are nonhelical region. VWFA domains are found at residues 30–209 (DVVF…IKDV), 236–413 (DLVF…LKKL), 442–612 (DIHF…KNEV), 628–797 (DIMF…ERKL), 814–987 (DVVF…FTLV), 1005–1178 (DVIF…KKRI), and 1194–1376 (DIVV…KLSQ). N201 and N260 each carry an N-linked (GlcNAc...) asparagine glycan. The N-linked (GlcNAc...) asparagine glycan is linked to N835. 6 Collagen-like domains span residues 1395–1446 (GIPG…GCPG), 1434–1490 (GPQG…KGDP), 1464–1520 (GDDG…PGQN), 1524–1580 (KGQK…TLGA), 1579–1629 (GAEG…LGKK), and 1674–1729 (GDAG…MAGQ). Residues 1395–1728 (GIPGPHGTRG…GQRGIKGMAG (334 aa)) are triple-helical region. Residues 1404–1693 (GLQAMKGSQG…NPGIPGGPGP (290 aa)) are disordered. The Cell attachment site motif lies at 1430–1432 (RGD). The span at 1511 to 1522 (PGDPGNPGQNNN) shows a compositional bias: low complexity. Composition is skewed to low complexity over residues 1601–1611 (SQGQKGPQGSP) and 1622–1641 (RPGLLGKKGEPGLPGDLGPV). A nonhelical region region spans residues 1729 to 2615 (QPVYSQCDLI…EDKEMEATDI (887 aa)). 3 VWFA domains span residues 1758-1965 (ELVF…MDVV), 1963-2154 (DVVF…AKFL), and 2291-2487 (DVAF…VKPF). An N-linked (GlcNAc...) asparagine glycan is attached at N2509.

Belongs to the type VI collagen family. As to quaternary structure, trimers composed of three different chains: alpha-1(VI), alpha-2(VI), and alpha-3(VI) or alpha-5(VI) or alpha-6(VI). Post-translationally, prolines at the third position of the tripeptide repeating unit (G-X-Y) are hydroxylated in some or all of the chains. Expressed in skin, followed by lung, small intestine, colon and testis. In skin, it is expressed in the epidermis with strongest staining in suprabasal viable layers. In ATOD patients, it is absent in the most differentiated upper spinous and granular layers (at protein level).

The protein resides in the secreted. It is found in the extracellular space. Its subcellular location is the extracellular matrix. Its function is as follows. Collagen VI acts as a cell-binding protein. The chain is Collagen alpha-5(VI) chain (COL6A5) from Homo sapiens (Human).